The following is an 868-amino-acid chain: Receptor-like protein kinase At5g59670 (868 aa).

Residues 1–22 form the signal peptide; that stretch reads MESSFGLLLALLTLTIIHIVQA. Over 23–500 the chain is Extracellular; the sequence is QDPQGFISLD…PRLIKPPKKE (478 aa). N-linked (GlcNAc...) asparagine glycans are attached at residues Asn-38, Asn-94, Asn-141, Asn-287, Asn-300, Asn-372, Asn-405, Asn-416, Asn-423, Asn-445, Asn-464, and Asn-471. LRR repeat units follow at residues 409–432, 433–459, and 461–481; these read PPRITSLNLSSSRLNGTIAAAIQS, ITQLETLDLSYNNLTGEVPEFLGKMKS, and SVINLSGNNLNGSIPQALRKK. The chain crosses the membrane as a helical span at residues 501 to 521; it reads FPVAIVTLVVFVTVIVVLFLV. Residues 522-868 lie on the Cytoplasmic side of the membrane; it reads FRKKMSTIVK…LDTTAVPMAR (347 aa). Thr-555 is subject to Phosphothreonine. Positions 564–834 constitute a Protein kinase domain; it reads KNFQRVLGKG…SMSQVIHELK (271 aa). Residues 570 to 578 and Lys-592 each bind ATP; that span reads LGKGGFGMV. Tyr-637 bears the Phosphotyrosine mark. Residue Asp-689 is the Proton acceptor of the active site. Ser-723 carries the post-translational modification Phosphoserine. Phosphothreonine is present on residues Thr-724 and Thr-729.

The protein belongs to the protein kinase superfamily. Ser/Thr protein kinase family. Autophosphorylated on Tyr and Thr residues.

Its subcellular location is the cell membrane. It carries out the reaction L-seryl-[protein] + ATP = O-phospho-L-seryl-[protein] + ADP + H(+). It catalyses the reaction L-threonyl-[protein] + ATP = O-phospho-L-threonyl-[protein] + ADP + H(+). The catalysed reaction is L-tyrosyl-[protein] + ATP = O-phospho-L-tyrosyl-[protein] + ADP + H(+). Its function is as follows. Probable receptor with a dual specificity kinase activity acting on both serine/threonine- and tyrosine-containing substrates. The chain is Receptor-like protein kinase At5g59670 from Arabidopsis thaliana (Mouse-ear cress).